A 375-amino-acid chain; its full sequence is Delta(9) fatty acid conjugase-like enzyme (375 aa).

Helical transmembrane passes span 38-58 (LSLSFYYLFYDLIKVCILFYV) and 66-86 (LPYSLSCIVWPLYWFFQGAFL). A Histidine box-1 motif is present at residues 94-98 (HECGH). The Histidine box-2 motif lies at 130–134 (HRNHH). Transmembrane regions (helical) follow at residues 168–188 (FGLVVNMVFELTFGYPSYLIF), 219–239 (VFFSDVGICIVLYALYRIAIA), and 241–261 (GAMLVLYVYGLPWVVMSAFIF). The short motif at 307–311 (HVVHH) is the Histidine box-3 element.

Belongs to the fatty acid desaturase type 1 family.

The protein resides in the membrane. Functionally, involved in the biosynthesis of dimorphecolic acid (9-OH-18:2(10E,12E)). Catalyzes the formation of the C-9 hydroxyl group and the (E)-delta(10) double bond from the trans-linoleic acid (16:2(9Z,12E)) produced by FAD2-1. Very limited activity with cis-linoleic acid (16:2(9Z,12Z)). The chain is Delta(9) fatty acid conjugase-like enzyme from Dimorphotheca sinuata (African daisy).